Reading from the N-terminus, the 1155-residue chain is RhoGEF domain-containing protein gxcJ (1155 aa).

5 disordered regions span residues 114-216 (ENNS…NFLK), 259-333 (LNKK…IPSN), 429-460 (LVSQ…DSLE), 484-508 (LNNE…TTTT), and 604-639 (SNSN…NNYQ). 3 stretches are compositionally biased toward low complexity: residues 115–153 (NNSI…TNNN), 161–211 (TITN…NNNN), and 260–303 (NKKS…NNNN). A coiled-coil region spans residues 192–257 (NNNNNNNNNN…KDIEKLNSAL (66 aa)). A compositionally biased stretch (polar residues) spans 304-319 (YKPTITSSQTQPSLME). The segment covering 320–330 (NSKDIDKKEKI) has biased composition (basic and acidic residues). Residues 441-457 (FLASASSSSTTTITTTD) show a composition bias toward low complexity. Positions 604–637 (SNSNSSNNNNSNSNNITNSNSSSFSKKNSNNNNN) are enriched in low complexity. In terms of domain architecture, DH spans 700-874 (HRTNLIKEIL…EKIVGTINSQ (175 aa)). The tract at residues 1084–1155 (SHRLSIPSTS…LVKSLVNIKT (72 aa)) is disordered. Low complexity-rich tracts occupy residues 1093-1121 (SSPN…GSPN) and 1128-1137 (QQQQLQQQQQ).

GTPase-activating protein. The protein is RhoGEF domain-containing protein gxcJ (gxcJ) of Dictyostelium discoideum (Social amoeba).